A 170-amino-acid chain; its full sequence is MPRSQRNDNFTDKTFTIVADILLRIIPTAPGEKEAFTYYRDGVMSAQSEGEYAEALQNYYEAMRPEIDPYDRSYILYNIGLIHMSNGEHTEALEYYFQALKRNPSLPQAFNNMAVICHYRGEQAIRQGDPETAEAWSDRAAEYWKQAIALAPGNYIEAQNWLKITGRLGE.

TPR repeat units lie at residues 35–69, 73–106, and 121–154; these read AFTY…EIDP, SYIL…NPSL, and GEQA…APGN.

This sequence belongs to the Ycf3 family.

The protein resides in the plastid. Its subcellular location is the chloroplast thylakoid membrane. Essential for the assembly of the photosystem I (PSI) complex. May act as a chaperone-like factor to guide the assembly of the PSI subunits. This Cycas taitungensis (Prince sago) protein is Photosystem I assembly protein Ycf3.